We begin with the raw amino-acid sequence, 1448 residues long: MALETEAKNSNATATGDATATATKASGKAKENNNTAGGKKNLNPNSNQQNSNQNLVNGNGTAADGPAAKKKGKKNRNKSPTEPTTEAVLSNGHAEKPTVVDAVEDNADTNANVEKPQEGGAPDAEADGDDIDLDALQDIGITVNISSPGADLLCVQLSSMELVQEIHQLLMDREETCHRTCFSLQLDNVTLDNFAELKSINNLEQGSTIKVVEEPYTMREARIHVRHVRDLLKNLDPADAYNGIDCTSLTYLNTITQGDLLDKKRTRPDSVDCTPPEYVTPGVSDPPILPLHPNVKNAKGPQALKVLTTSAWNPPPGPRKLHGDLMYLYVVTMEDKRFHISACSKGFFINQSTDDTFNPKPDNPSHLSHSLIDLLSHISPSFRRAFQTIQKRRTMRHAFERVATPYQVYQWAAPILEHTVDAIRAEDAFSSKLGYEEHIPGQTRDWNEELQTTRELPRKTLPERLLRERAIFKVHGDFVTAATRGAMAVIDGNVLAINPGEDTKMQMFIWNNIFFSMGFDVRDHYKELGGDAAAFVAPRYDLHGVRVYNAVDIEGLYTLGTVVVDYRGYRVTAQSIIPGILEREQEQSVVYGSIDFGKTVLSHPKYLELLRQAGKHLKILPHVVLNERDEPVELCSSVECKGIIGNDGRHYILDLLRTFPPDVNFLKLQDVQLSKELVDMGFPIEHRHKLCCLRQELLEAFIEDRHVNFIRIAAARLQQLTTIKQSEKSEANPVPALEGAEAASKVNGAEKPDDKEKKNEEEEKKERSTSGEARAAAIVNAIREAQSNVATSNEVQAAEVVKRACAAVGSLKEKEFDFRFNPDVFSPGIRHADGEEGTSLAKQKVLVQEAAEFLVLKQIPAFIKEHMSHSSSPIDGQSLTESLHSHGINVRYLGKVIKILSQMPRMDYLHRIAVLELIVRATKHIYYTYMQNTEPLHLSAAISHFLNCLLTNGPVNPAVSSEEAHKKRGNGGKHNKHKSSKGGKGQQQQQTTGNQNGSSSGSSNSSSASDWTLMTPRSLWQQIRKEAKVYWDWELDCDSIETAVSKYGILRISLMRAFCLKVGIQVLLREYNFESKHKPTFGDDDIVNVFPIVKHISPRATDAYNFYTTGQAKIQQGLFKEGYELISGALNLLNNVFGALHQENGSCLRMLARLSYLLGDAQDALAIQQRAVIMSERVNGMDHPSTILEYTHLSLYSFANGHVGMSLKLLYRARYLMVLICGEDHPEVALIDSNISLILHALGEYELSLRFIEHALKLNLKYFGDKDMHVALSYHLMARTQSCMGDFRSALNNEKETYSFYKSQLGENHEKTRDSAECLRLLTQQAVLLQRKMNDIYSSGKLTSDLPPIHITPPSMGSVLDMLNTINGILFVKISRKDIVKVRSEIEKHFKTDSTENEVNDAINSIVAAANNNGEAEDAVSKDIKEQPEAGKQLTNGDKAAATEATSS.

Disordered regions lie at residues 1 to 96 (MALE…HAEK), 110 to 129 (NANV…ADGD), and 265 to 286 (RTRP…VSDP). Composition is skewed to low complexity over residues 9 to 26 (NSNA…TKAS) and 41 to 66 (NLNP…ADGP). Over residues 68–77 (AKKKGKKNRN) the composition is skewed to basic residues. The segment covering 78–88 (KSPTEPTTEAV) has biased composition (polar residues). S270 is modified (phosphoserine). The region spanning 424–666 (RAEDAFSSKL…RTFPPDVNFL (243 aa)) is the Clu domain. Disordered stretches follow at residues 726–773 (SEKS…SGEA), 958–1010 (AVSS…SASD), and 1414–1448 (GEAE…ATSS). Residues 748–769 (GAEKPDDKEKKNEEEEKKERST) are compositionally biased toward basic and acidic residues. Over residues 966-981 (KKRGNGGKHNKHKSSK) the composition is skewed to basic residues. The segment covering 986–1007 (QQQQQTTGNQNGSSSGSSNSSS) has biased composition (low complexity). Basic and acidic residues predominate over residues 1419–1429 (AVSKDIKEQPE).

Belongs to the CLU family.

Its subcellular location is the cytoplasm. Functionally, mRNA-binding protein involved in proper cytoplasmic distribution of mitochondria. In Drosophila melanogaster (Fruit fly), this protein is Protein clueless.